The primary structure comprises 585 residues: Glucose oxidase-like protein fsoC (585 aa).

Alanine 104 provides a ligand contact to FAD. Histidine 521 acts as the Proton donor in catalysis. Catalysis depends on histidine 564, which acts as the Proton acceptor.

This sequence belongs to the GMC oxidoreductase family. In terms of assembly, monomer. FAD is required as a cofactor.

Its function is as follows. Glucose oxidase-like protein; part of the gene cluster that mediates the biosynthesis of the enfumafungin-type antibiotic fuscoatroside. Four enzymes are sufficient to produce fuscoatroside: the terpene cyclase-glycosyl transferase fusion protein fsoAthe cytochrome P450 monoxygenases fsoD and fsoE, and the acetyltransferase fsoF; the cytochrome P450 monooxygenase fsoB and the glucose oxidase-like protein fsoC do not seem to play a role in biosynthesis of fuscoatroside. In terms of biological role, glucose oxidase; part of the gene cluster that mediates the biosynthesis of the enfumafungin-type antibiotic, fuscoatroside. The sequence is that of Glucose oxidase-like protein fsoC from Humicola fuscoatra.